Consider the following 165-residue polypeptide: Myosin regulatory light chain 2, ventricular/cardiac muscle isoform (165 aa).

S2 carries the n,N,N-trimethylserine modification. N14 bears the Deamidated asparagine mark. Residues S15 and S19 each carry the phosphoserine modification. EF-hand domains are found at residues 24-59 (TQIQEFKEAFTIMDQNRDGFIDKNDLRDTFAALGRV), 94-129 (DPEETILNAFKVFDPEGKGVLKADYVREMLTTQAER), and 130-165 (FSKDEIDQMFAAFPPDVTGNLDYKNLVHIITHGEEK). Ca(2+) contacts are provided by D37, N39, D41, and D48. T52 carries the post-translational modification Phosphothreonine.

Myosin is a hexamer of 2 heavy chains and 4 light chains. Interacts with MYOC. N-terminus is methylated by METTL11A/NTM1. In terms of processing, phosphorylated by MYLK3 and MYLK2; promotes cardiac muscle contraction and function. Dephosphorylated by PPP1CB complexed to PPP1R12B. The phosphorylated form in adult is expressed as gradients across the heart from endocardium (low phosphorylation) to epicardium (high phosphorylation); regulates cardiac torsion and workload distribution.

Its subcellular location is the cytoplasm. It is found in the myofibril. The protein localises to the sarcomere. The protein resides in the a band. Its function is as follows. Contractile protein that plays a role in heart development and function. Following phosphorylation, plays a role in cross-bridge cycling kinetics and cardiac muscle contraction by increasing myosin lever arm stiffness and promoting myosin head diffusion; as a consequence of the increase in maximum contraction force and calcium sensitivity of contraction force. These events altogether slow down myosin kinetics and prolong duty cycle resulting in accumulated myosins being cooperatively recruited to actin binding sites to sustain thin filament activation as a means to fine-tune myofilament calcium sensitivity to force. During cardiogenesis plays an early role in cardiac contractility by promoting cardiac myofibril assembly. This is Myosin regulatory light chain 2, ventricular/cardiac muscle isoform from Oryctolagus cuniculus (Rabbit).